We begin with the raw amino-acid sequence, 264 residues long: Teichoic acids export ATP-binding protein TagH (264 aa).

In terms of domain architecture, ABC transporter spans 22-243; sequence ERLKDVIVPF…YEKFLNDFKK (222 aa). An ATP-binding site is contributed by 57 to 64; the sequence is GINGSGKS.

This sequence belongs to the ABC transporter superfamily. Teichoic acids exporter (TC 3.A.1.104.1) family. In terms of assembly, the complex is composed of two ATP-binding proteins (TagH) and two transmembrane proteins (TagG).

It is found in the cell membrane. The enzyme catalyses ATP + H2O + teichoic acidSide 1 = ADP + phosphate + teichoic acidSide 2.. In terms of biological role, part of the ABC transporter complex TagGH involved in teichoic acids export. Responsible for energy coupling to the transport system. The chain is Teichoic acids export ATP-binding protein TagH from Staphylococcus saprophyticus subsp. saprophyticus (strain ATCC 15305 / DSM 20229 / NCIMB 8711 / NCTC 7292 / S-41).